Reading from the N-terminus, the 49-residue chain is Osteocalcin (49 aa).

Residues 1-47 (YLDHGLGAPAPYVDPLEPKREVCELNPDCDELADQMGFQEAYRRFYG) form the Gla domain. Pro9 carries the 4-hydroxyproline modification. Glu17, Glu21, Glu24, and Asp30 together coordinate Ca(2+). 4-carboxyglutamate occurs at positions 17, 21, and 24. A disulfide bridge links Cys23 with Cys29.

It belongs to the osteocalcin/matrix Gla protein family. Post-translationally, gamma-carboxyglutamic acid residues are formed by vitamin K dependent carboxylation. These residues are essential for the binding of calcium.

The protein localises to the secreted. The carboxylated form is one of the main organic components of the bone matrix, which constitutes 1-2% of the total bone protein: it acts as a negative regulator of bone formation and is required to limit bone formation without impairing bone resorption or mineralization. The carboxylated form binds strongly to apatite and calcium. Its function is as follows. The uncarboxylated form acts as a hormone secreted by osteoblasts, which regulates different cellular processes, such as energy metabolism, male fertility and brain development. Regulates of energy metabolism by acting as a hormone favoring pancreatic beta-cell proliferation, insulin secretion and sensitivity and energy expenditure. Uncarboxylated osteocalcin hormone also promotes testosterone production in the testes: acts as a ligand for G protein-coupled receptor GPRC6A at the surface of Leydig cells, initiating a signaling response that promotes the expression of enzymes required for testosterone synthesis in a CREB-dependent manner. Also acts as a regulator of brain development: osteocalcin hormone crosses the blood-brain barrier and acts as a ligand for GPR158 on neurons, initiating a signaling response that prevents neuronal apoptosis in the hippocampus, favors the synthesis of all monoamine neurotransmitters and inhibits that of gamma-aminobutyric acid (GABA). Osteocalcin also crosses the placenta during pregnancy and maternal osteocalcin is required for fetal brain development. The chain is Osteocalcin from Lama guanicoe (Guanaco).